Reading from the N-terminus, the 302-residue chain is Recombination-associated protein RdgC (302 aa).

Belongs to the RdgC family.

The protein resides in the cytoplasm. It localises to the nucleoid. May be involved in recombination. The sequence is that of Recombination-associated protein RdgC from Xanthomonas campestris pv. campestris (strain 8004).